The primary structure comprises 1516 residues: Myosin-14 (1516 aa).

Residues 7 to 56 (NVGSCVWVEDPEVAWIDGEVIEVKGSDIKVKCTSGKTVAIKVSSAYPKDV) form the Myosin N-terminal SH3-like domain. The 678-residue stretch at 61 to 738 (SGVDDMTRLA…QMADLDARRN (678 aa)) folds into the Myosin motor domain. ATP-binding positions include 155–162 (GESGAGKT) and 208–216 (NNNSSRFGK). Actin-binding regions lie at residues 494–528 (LIEKKAGGIISLLNEACMFPRATHETFAEKMYQTF), 530–553 (DHKHFSKPKLSRTDFTICHYAGDV), 588–612 (FPLLAEDANKKSKFSSISSRFKQQL), and 612–634 (LVTLLETLSTTEPHYIRCVKPNN). 6 consecutive IQ domains span residues 741–770 (LGRAASRIQRKFRSYLSRKTFLMLRKVATN), 764–793 (LRKVATNMQAVCRGQLSRLIFEGLRRDAAV), 789–818 (RDAAVLEIQRDIRMHLARKSYKELYFAAVS), 812–841 (LYFAAVSIQLGIRGMASRGRLRFQRQDKAA), 837–866 (QDKAAIMIQSHCRKFLAQLHYQRLKKAAIT), and 860–889 (LKKAAITTQSAWRARLARKELRKLKMAAKE). Residues 890–1056 (TGVLEAAKSK…ENKILRQKSL (167 aa)) are a coiled coil. A disordered region spans residues 1061-1085 (GHLPPTPVKGSQNGHFSSKESPFNG). Residues 1069 to 1084 (KGSQNGHFSSKESPFN) show a composition bias toward polar residues. The Dilute domain maps to 1158 to 1463 (DRLVQMIGSA…IANMRVLMTE (306 aa)).

Belongs to the TRAFAC class myosin-kinesin ATPase superfamily. Myosin family. Plant myosin class XI subfamily. Homodimer.

Its function is as follows. Myosin heavy chain that is required for the cell cycle-regulated transport of various organelles and proteins for their segregation. Functions by binding with its tail domain to receptor proteins on organelles and exerting force with its N-terminal motor domain against actin filaments, thereby transporting its cargo along polarized actin cables. This chain is Myosin-14 (XI-H), found in Arabidopsis thaliana (Mouse-ear cress).